Consider the following 276-residue polypeptide: MYLGAHLSISKGFESAVREALSIGATTFQFFTRNPRGGAAKALDPDDIARSIWLREEHGFGPLVAHAPYTINLAAPKEETWAFAKMTLAADIVRMATAQVPYMVVHPGSHVGQGIEAGIERITQALNEILRPDQGVMVLLEGMSGAGTEVGGRFEELRAIIDGLQVPEVVGVNLDSCHLFGAGYDVKSDFAAVLDAFDRIIGLERLKAMHINDSQQPLGSHKDRHALLGQGLIGSDALAALLNHPALVGLPLNLETPGEIADYRREIAWMRSALKQ.

Zn(2+) contacts are provided by His-66, His-106, Glu-141, Asp-175, His-178, His-210, Asp-223, His-225, and Glu-255.

The protein belongs to the AP endonuclease 2 family. The cofactor is Zn(2+).

The enzyme catalyses Endonucleolytic cleavage to 5'-phosphooligonucleotide end-products.. Endonuclease IV plays a role in DNA repair. It cleaves phosphodiester bonds at apurinic or apyrimidinic (AP) sites, generating a 3'-hydroxyl group and a 5'-terminal sugar phosphate. In Heliobacterium modesticaldum (strain ATCC 51547 / Ice1), this protein is Probable endonuclease 4.